The sequence spans 121 residues: Ribosome-binding factor A (121 aa).

It belongs to the RbfA family. As to quaternary structure, monomer. Binds 30S ribosomal subunits, but not 50S ribosomal subunits or 70S ribosomes.

The protein resides in the cytoplasm. One of several proteins that assist in the late maturation steps of the functional core of the 30S ribosomal subunit. Associates with free 30S ribosomal subunits (but not with 30S subunits that are part of 70S ribosomes or polysomes). Required for efficient processing of 16S rRNA. May interact with the 5'-terminal helix region of 16S rRNA. This Hydrogenovibrio crunogenus (strain DSM 25203 / XCL-2) (Thiomicrospira crunogena) protein is Ribosome-binding factor A.